The following is a 302-amino-acid chain: Syntaxin-17 (302 aa).

At S2 the chain carries N-acetylserine. Residues 2–228 (SEDEEKVKLR…KNLGKAAKYK (227 aa)) lie on the Cytoplasmic side of the membrane. Residue K41 is modified to N6-acetyllysine. Residues 53–123 (EEHINAGRTV…EELKKQFNDE (71 aa)) are a coiled coil. A Phosphotyrosine; by ABL1 modification is found at Y157. In terms of domain architecture, t-SNARE coiled-coil homology spans 162–224 (IPRDQNAAES…EEGTKNLGKA (63 aa)). The helical transmembrane segment at 229–249 (LAALPVAGALIGGVVGGPIGL) threads the bilayer. A necessary and sufficient for localization to autophagosome region spans residues 229 to 275 (LAALPVAGALIGGVVGGPIGLLAGFKVAGIAAALGGGVLGFTGGKLI). The Lumenal portion of the chain corresponds to 250–254 (LAGFK). Residues 255-275 (VAGIAAALGGGVLGFTGGKLI) form a helical membrane-spanning segment. Residues 276-302 (QRRKQKMMEKLASSCPDLPSQTDKKCS) are Cytoplasmic-facing. The residue at position 289 (S289) is a Phosphoserine. An Endoplasmic reticulum retention signal motif is present at residues 299-302 (KKCS).

The protein belongs to the syntaxin family. Forms a SNARE complex composed of VAMP8, SNAP29 and STX17 involved in fusion of autophagosome with lysosome. May interact with VTI1B. Probably interacts with BET1, SCFD1 and SEC22B. Interacts with PTPN2 and ABL1; involved in STX17 phosphorylation. Interacts with COPB1. Interacts with TMED9 and TMED10; the interaction is direct. Interacts with VAMP7. Interacts with RUBCNL/PACER; promoting targeting of RUBCNL/PACER to autophagosome. Interacts with VAMP8, SNAP29, VPS39 and VPS41; these interactions are increased in the absence of TMEM39A. Interacts with IRGM; promoting STX17 recruitment to autophagosomes. Interacts with ATG8 proteins GABARAP and MAP1LC3B. Interacts with RNF115; this interaction enhances STX17 stability which in turn promotes autophagosome maturation. Interacts with RAB39A (GTP-bound); the interaction promotes autophagosome-lysosome membrane fusion driven by STX17-SNAP29-VAMP8. Interacts with RAB39B; the interaction may promote a different fonction in autophagy as compared with RAB39A. In terms of processing, phosphorylated at Tyr-157 probably by ABL1. Dephosphorylation by PTPN2; regulates exit from the endoplasmic reticulum.

The protein localises to the endoplasmic reticulum membrane. It localises to the smooth endoplasmic reticulum membrane. It is found in the endoplasmic reticulum-Golgi intermediate compartment membrane. The protein resides in the cytoplasmic vesicle. Its subcellular location is the autophagosome membrane. The protein localises to the COPII-coated vesicle membrane. It localises to the cytoplasm. It is found in the cytosol. The protein resides in the mitochondrion membrane. Its subcellular location is the autolysosome membrane. SNAREs, soluble N-ethylmaleimide-sensitive factor-attachment protein receptors, are essential proteins for fusion of cellular membranes. SNAREs localized on opposing membranes assemble to form a trans-SNARE complex, an extended, parallel four alpha-helical bundle that drives membrane fusion. STX17 is a SNARE of the autophagosome involved in autophagy through the direct control of autophagosome membrane fusion with the lysosome membrane. May also play a role in the early secretory pathway where it may maintain the architecture of the endoplasmic reticulum-Golgi intermediate compartment/ERGIC and Golgi and/or regulate transport between the endoplasmic reticulum, the ERGIC and the Golgi. This chain is Syntaxin-17, found in Bos taurus (Bovine).